We begin with the raw amino-acid sequence, 1131 residues long: Phytochrome B1 (1131 aa).

Residues 1–11 (MASGSRTKHSY) show a composition bias toward basic residues. Residues 1–26 (MASGSRTKHSYHNSSQGQAQSSGTSN) are disordered. Low complexity predominate over residues 14 to 25 (SSQGQAQSSGTS). Positions 229 to 408 (DIKLLCDTVV…AFGLQLNMEL (180 aa)) constitute a GAF domain. Position 334 (C334) interacts with phytochromobilin. 2 consecutive PAS domains span residues 622–693 (VARE…LRGV) and 756–808 (DYKA…GEIF). The region spanning 904-1124 (YICQEVKSPL…MIILDLPMTR (221 aa)) is the Histidine kinase domain.

Belongs to the phytochrome family. As to quaternary structure, homodimer. Post-translationally, contains one covalently linked phytochromobilin chromophore.

Regulatory photoreceptor which exists in two forms that are reversibly interconvertible by light: the Pr form that absorbs maximally in the red region of the spectrum and the Pfr form that absorbs maximally in the far-red region. Photoconversion of Pr to Pfr induces an array of morphogenic responses, whereas reconversion of Pfr to Pr cancels the induction of those responses. Pfr controls the expression of a number of nuclear genes including those encoding the small subunit of ribulose-bisphosphate carboxylase, chlorophyll A/B binding protein, protochlorophyllide reductase, rRNA, etc. It also controls the expression of its own gene(s) in a negative feedback fashion. The chain is Phytochrome B1 from Solanum lycopersicum (Tomato).